Reading from the N-terminus, the 252-residue chain is 2-succinyl-6-hydroxy-2,4-cyclohexadiene-1-carboxylate synthase (252 aa).

The protein belongs to the AB hydrolase superfamily. MenH family. Monomer.

It carries out the reaction 5-enolpyruvoyl-6-hydroxy-2-succinyl-cyclohex-3-ene-1-carboxylate = (1R,6R)-6-hydroxy-2-succinyl-cyclohexa-2,4-diene-1-carboxylate + pyruvate. It participates in quinol/quinone metabolism; 1,4-dihydroxy-2-naphthoate biosynthesis; 1,4-dihydroxy-2-naphthoate from chorismate: step 3/7. The protein operates within quinol/quinone metabolism; menaquinone biosynthesis. Catalyzes a proton abstraction reaction that results in 2,5-elimination of pyruvate from 2-succinyl-5-enolpyruvyl-6-hydroxy-3-cyclohexene-1-carboxylate (SEPHCHC) and the formation of 2-succinyl-6-hydroxy-2,4-cyclohexadiene-1-carboxylate (SHCHC). The protein is 2-succinyl-6-hydroxy-2,4-cyclohexadiene-1-carboxylate synthase of Salmonella paratyphi B (strain ATCC BAA-1250 / SPB7).